The sequence spans 447 residues: Probable glycine dehydrogenase (decarboxylating) subunit 1 (447 aa).

It belongs to the GcvP family. N-terminal subunit subfamily. In terms of assembly, the glycine cleavage system is composed of four proteins: P, T, L and H. In this organism, the P 'protein' is a heterodimer of two subunits.

The enzyme catalyses N(6)-[(R)-lipoyl]-L-lysyl-[glycine-cleavage complex H protein] + glycine + H(+) = N(6)-[(R)-S(8)-aminomethyldihydrolipoyl]-L-lysyl-[glycine-cleavage complex H protein] + CO2. In terms of biological role, the glycine cleavage system catalyzes the degradation of glycine. The P protein binds the alpha-amino group of glycine through its pyridoxal phosphate cofactor; CO(2) is released and the remaining methylamine moiety is then transferred to the lipoamide cofactor of the H protein. This Maricaulis maris (strain MCS10) (Caulobacter maris) protein is Probable glycine dehydrogenase (decarboxylating) subunit 1.